A 310-amino-acid chain; its full sequence is Upstream stimulatory factor 1 (310 aa).

Positions 1 to 17 are enriched in polar residues; the sequence is MKGQQKTAETEEGTVQI. Disordered stretches follow at residues 1–26 and 171–209; these read MKGQ…ATGE and QGGS…EVER. Over residues 190 to 209 the composition is skewed to basic and acidic residues; it reads EAPRTTRDEKRRAQHNEVER. Positions 199-254 constitute a bHLH domain; the sequence is KRRAQHNEVERRRRDKINNWIVQLSKIIPDCSMESTKSGQSKGGILSKACDYIQEL. Positions 271–292 are leucine-zipper; sequence LQLDNDVLRQQVEDLKNKNLLL. A Glycyl lysine isopeptide (Lys-Gly) (interchain with G-Cter in SUMO2) cross-link involves residue Lys306.

In terms of assembly, efficient DNA binding requires dimerization with another bHLH protein. Binds DNA as a homodimer or a heterodimer (USF1/USF2). Interacts with varicella-zoster virus IE62 protein.

It is found in the nucleus. Its function is as follows. Transcription factor that binds to a symmetrical DNA sequence (E-boxes) (5'-CACGTG-3') that is found in a variety of viral and cellular promoters. This is Upstream stimulatory factor 1 (USF1) from Homo sapiens (Human).